We begin with the raw amino-acid sequence, 485 residues long: Mitochondrial metalloendopeptidase OMA1 (485 aa).

A mitochondrion-targeting transit peptide spans 1 to 16; sequence MKPSLKRRLLLLSRKF. The Mitochondrial matrix portion of the chain corresponds to 17 to 147; it reads AKASIRKLLR…GPGRWFQNPR (131 aa). The chain crosses the membrane as a helical span at residues 148–168; that stretch reads TVFTVVLVGSVGLITLIVGNT. At 169–485 the chain is on the mitochondrial intermembrane side; sequence ETIPYTKRTH…AGRTGVEGFL (317 aa). His352 provides a ligand contact to Zn(2+). Glu353 is an active-site residue. Zn(2+)-binding residues include His356 and Glu405. The required for protease activation stretch occupies residues 456–485; the sequence is KLLAQANVMEEALMIYREVQAGRTGVEGFL.

Belongs to the peptidase M48A family. In terms of assembly, homooligomer. Zn(2+) is required as a cofactor.

The protein localises to the mitochondrion inner membrane. Functionally, protease that is part of the quality control system in the inner membrane of mitochondria. Metalloendopeptidase that modulates the oxidative phosphorylation (OXPHOS) system and plant growth. Involved in tolerance mechanisms to heat, osmotic and oxidative stresses. In Arabidopsis thaliana (Mouse-ear cress), this protein is Mitochondrial metalloendopeptidase OMA1.